We begin with the raw amino-acid sequence, 338 residues long: Probable beta-1,4-xylosyltransferase IRX9 (338 aa).

The interval 1-21 (MASAGGCKKKTGNSRSRSPRS) is disordered. At 1–27 (MASAGGCKKKTGNSRSRSPRSPVVLRR) the chain is on the cytoplasmic side. The helical; Signal-anchor for type II membrane protein transmembrane segment at 28–46 (AMLHSSLCFLVGLLAGLAA) threads the bilayer. At 47-338 (PSDWPAAAGA…IMLWRIQTTL (292 aa)) the chain is on the lumenal side. N-linked (GlcNAc...) asparagine glycans are attached at residues asparagine 232 and asparagine 314.

The protein belongs to the glycosyltransferase 43 family.

It localises to the golgi apparatus membrane. Probable beta-1,4-xylosyltransferase involved in xylan biosynthesis in cell walls. The chain is Probable beta-1,4-xylosyltransferase IRX9 from Oryza sativa subsp. japonica (Rice).